A 388-amino-acid chain; its full sequence is Processive diacylglycerol beta-glucosyltransferase (388 aa).

The protein belongs to the glycosyltransferase 28 family. UgtP subfamily.

It is found in the cell membrane. It catalyses the reaction a 1,2-diacyl-3-O-(beta-D-glucopyranosyl)-sn-glycerol + UDP-alpha-D-glucose = a 1,2-diacyl-3-O-(beta-D-Glc-(1-&gt;6)-beta-D-Glc)-sn-glycerol + UDP + H(+). It carries out the reaction a 1,2-diacyl-3-O-(beta-D-Glc-(1-&gt;6)-beta-D-Glc)-sn-glycerol + UDP-alpha-D-glucose = a 1,2-diacyl-3-O-(beta-D-Glc-(1-&gt;6)-beta-D-Glc-(1-&gt;6)-beta-D-Glc)-sn-glycerol + UDP + H(+). The enzyme catalyses a 1,2-diacyl-sn-glycerol + UDP-alpha-D-glucose = a 1,2-diacyl-3-O-(beta-D-glucopyranosyl)-sn-glycerol + UDP + H(+). Its pathway is glycolipid metabolism; diglucosyl-diacylglycerol biosynthesis. In terms of biological role, processive glucosyltransferase involved in the biosynthesis of both the bilayer- and non-bilayer-forming membrane glucolipids. Is able to successively transfer up to three glucosyl residues to diacylglycerol (DAG), thereby catalyzing the formation of beta-monoglucosyl-DAG (3-O-(beta-D-glucopyranosyl)-1,2-diacyl-sn-glycerol), beta-diglucosyl-DAG (3-O-(beta-D-glucopyranosyl-beta-(1-&gt;6)-D-glucopyranosyl)-1,2-diacyl-sn-glycerol) and beta-triglucosyl-DAG (3-O-(beta-D-glucopyranosyl-beta-(1-&gt;6)-D-glucopyranosyl-beta-(1-&gt;6)-D-glucopyranosyl)-1,2-diacyl-sn-glycerol). Beta-diglucosyl-DAG is the predominant glycolipid found in Bacillales and is also used as a membrane anchor for lipoteichoic acid (LTA). This is Processive diacylglycerol beta-glucosyltransferase from Bacillus cereus (strain G9842).